A 539-amino-acid chain; its full sequence is O-phosphoserine--tRNA(Cys) ligase (539 aa).

Residues 188–190 (HMT), 233–235 (SAS), 275–276 (YY), and N319 contribute to the substrate site.

This sequence belongs to the class-II aminoacyl-tRNA synthetase family. O-phosphoseryl-tRNA(Cys) synthetase subfamily. As to quaternary structure, homotetramer. Interacts with SepCysS.

It catalyses the reaction tRNA(Cys) + O-phospho-L-serine + ATP = O-phospho-L-seryl-tRNA(Cys) + AMP + diphosphate. Catalyzes the attachment of O-phosphoserine (Sep) to tRNA(Cys). In Methanocaldococcus jannaschii (strain ATCC 43067 / DSM 2661 / JAL-1 / JCM 10045 / NBRC 100440) (Methanococcus jannaschii), this protein is O-phosphoserine--tRNA(Cys) ligase (sepS).